The chain runs to 246 residues: Envelope glycoprotein gp95 (246 aa).

The Extracellular portion of the chain corresponds to 1-192 (IPSRPVGGPC…EWAVHLLKGL (192 aa)). A glycan (N-linked (GlcNAc...) asparagine; by host) is linked at Asn-31. Cys-50 and Cys-86 are oxidised to a cystine. The interval 58–78 (GPTARIFASILAPGVAAAQAL) is fusion peptide. Residues 75 to 125 (AQALREIERLACWSVKQANLTTSLLGDLLDDVTSIRHAVLQNRAAIDFLLL) are a coiled coil. The N-linked (GlcNAc...) asparagine; by host glycan is linked to Asn-93. The tract at residues 114-130 (LQNRAAIDFLLLAHGHG) is immunosuppression. A disulfide bond links Cys-131 and Cys-138. N-linked (GlcNAc...) asparagine; by host glycosylation occurs at Asn-141. A coiled-coil region spans residues 143 to 173 (SDQSESIQKKFQLMKEHVNKIGVDSDLIGSW). A helical transmembrane segment spans residues 193-213 (LLGLVVILLLVVCLPCLLQML). 2 S-palmitoyl cysteine; by host lipidation sites follow: Cys-205 and Cys-208. Over 214 to 246 (CGNRRKMINNSISYHTEYKKLQKACGQPESRIV) the chain is Cytoplasmic.

Belongs to the Alpharetroviruses envelope glycoprotein family. As to quaternary structure, heterodimer with the transmembrane protein. The mature envelope protein (Env) consists of a trimer of SU-TM heterodimers attached by a labile interchain disulfide bond. Interacts with the host cell entry receptor TVA isoforms pg900 and pg800; this interaction allows the viral attachment. In terms of assembly, heterodimer with the surface protein. The mature envelope protein (Env) consists of a trimer of SU-TM heterodimers attached by a labile interchain disulfide bond. In terms of processing, specific enzymatic cleavages in vivo yield mature proteins. Envelope glycoproteins are synthesized as an inactive precursor that is N-glycosylated and processed likely by host cell furin or by a furin-like protease in the Golgi to yield the mature SU and TM proteins. The cleavage site between SU and TM requires the minimal sequence [KR]-X-[KR]-R. Post-translationally, the transmembrane protein is palmitoylated. Palmitoylation is necessary for glycoprotein function and infectivity.

Its subcellular location is the virion membrane. It is found in the host cell membrane. The surface protein (SU) attaches the virus to the host cell entry receptor TVA. This interaction triggers the refolding of the transmembrane protein (TM) thereby unmasking its fusion peptide and the formation of a reactive thiolate to activate its fusogenic potential. Fusion occurs at the host cell plasma membrane. Functionally, the transmembrane protein (TM) acts as a class I viral fusion protein. Under the current model, the protein has at least 3 conformational states: pre-fusion native state, pre-hairpin intermediate state, and post-fusion hairpin state. During viral and target cell membrane fusion, the coiled coil regions (heptad repeats) assume a trimer-of-hairpins structure, positioning the fusion peptide in close proximity to the C-terminal region of the ectodomain. The formation of this structure appears to drive apposition and subsequent fusion of viral and target cell membranes. Membranes fusion leads to delivery of the nucleocapsid into the cytoplasm. The chain is Envelope glycoprotein gp95 (env) from Rous sarcoma virus subgroup A (strain Schmidt-Ruppin) (RSV-SR-A).